Reading from the N-terminus, the 482-residue chain is MARGPDTARRWATLVVLAALSTAVTTTNPGIVARITQKGLDYACQQGVLTLQKELEKITIPNFSGNFKIKYLGKGQYSFFSMVIQGFNLPNSQIRPLPDKGLDLSIRDASIKIRGKWKARKNFIKLGGNFDLSVEGISILAGLNLGYDPASGHSTVTCSSCSSGINTVRIHISGSSLGWLIQLFRKRIESLLQKSMTRKICEVVTSTVSSKLQPYFQTLPVTTKLDKVAGVDYSLVAPPRATANNLDWLLKGEFFSLAHRSPPPFAPPALAFPSDHDRMVYLGISEYFFNTAGFVYQKAGALNLTLRDDMIPKESKFRLTTKFFGILIPQVAKMFPDMQMQLFIWASLPPKLTMKPSGLDLIFVLDTQAFAILPNSSLDPLFLLEMNLNLSVVVGAKSDRLIGELRLDKLLLELKHSDIGPFSVESLQSVINYVMPTIVLPVINKKLQKGFPLPLPAYIELFNLTLQPYQDFLLFGADVHYS.

The N-terminal stretch at 1-26 is a signal peptide; it reads MARGPDTARRWATLVVLAALSTAVTT. The interval 27–36 is central sheet, part 1; sequence TNPGIVARIT. The N-terminal barrel stretch occupies residues 36–219; it reads TQKGLDYACQ…SKLQPYFQTL (184 aa). The N-linked (GlcNAc...) asparagine glycan is linked to Asn-62. Cys-161 and Cys-201 form a disulfide bridge. The central sheet, part 2 stretch occupies residues 221–285; that stretch reads VTTKLDKVAG…HDRMVYLGIS (65 aa). The tract at residues 235–240 is cleavage sites for elastase; that stretch reads LVAPPR. The tract at residues 286-456 is C-terminal barrel; it reads EYFFNTAGFV…LQKGFPLPLP (171 aa). Residues Asn-303, Asn-375, Asn-389, and Asn-463 are each glycosylated (N-linked (GlcNAc...) asparagine). Residues 463-482 form a central sheet, part 3 region; it reads NLTLQPYQDFLLFGADVHYS.

Belongs to the BPI/LBP/Plunc superfamily. BPI/LBP family. Monomer. Homodimer; disulfide-linked. In terms of tissue distribution, restricted to cells of the myeloid series.

The protein localises to the secreted. It is found in the cytoplasmic granule membrane. In terms of biological role, the cytotoxic action of BPI is limited to many species of Gram-negative bacteria; this specificity may be explained by a strong affinity of the very basic N-terminal half for the negatively charged lipopolysaccharides that are unique to the Gram-negative bacterial outer envelope. The chain is Bactericidal permeability-increasing protein (BPI) from Bos taurus (Bovine).